A 538-amino-acid polypeptide reads, in one-letter code: Chaperonin GroEL (538 aa).

Residues 29-32 (TIGP), 86-90 (DGTTT), G413, 476-478 (NAA), and D492 contribute to the ATP site.

It belongs to the chaperonin (HSP60) family. Forms a cylinder of 14 subunits composed of two heptameric rings stacked back-to-back. Interacts with the co-chaperonin GroES.

The protein resides in the cytoplasm. The catalysed reaction is ATP + H2O + a folded polypeptide = ADP + phosphate + an unfolded polypeptide.. Together with its co-chaperonin GroES, plays an essential role in assisting protein folding. The GroEL-GroES system forms a nano-cage that allows encapsulation of the non-native substrate proteins and provides a physical environment optimized to promote and accelerate protein folding. This chain is Chaperonin GroEL, found in Staphylococcus aureus (strain bovine RF122 / ET3-1).